The following is a 449-amino-acid chain: Mannan endo-1,6-alpha-mannosidase DCW1 (449 aa).

A signal peptide spans 1–21 (MLVNKVIGLLGVLFATRFTNA). 12 N-linked (GlcNAc...) asparagine glycosylation sites follow: N34, N84, N109, N133, N203, N225, N240, N265, N281, N337, N362, and N420. The GPI-anchor amidated glycine moiety is linked to residue G428. A propeptide spans 429–449 (AGIITAVIGISIVACALWLVF) (removed in mature form).

The protein belongs to the glycosyl hydrolase 76 family.

The protein resides in the cell membrane. The enzyme catalyses Random hydrolysis of (1-&gt;6)-alpha-D-mannosidic linkages in unbranched (1-&gt;6)-mannans.. Required for normal synthesis of the cell wall. The sequence is that of Mannan endo-1,6-alpha-mannosidase DCW1 (DCW1) from Saccharomyces cerevisiae (strain ATCC 204508 / S288c) (Baker's yeast).